We begin with the raw amino-acid sequence, 516 residues long: Cytochrome P450 monooxygenase asR2 (516 aa).

The helical transmembrane segment at 9–29 (LNSITFSLLVFLGFVGVSQLI) threads the bilayer. N248 and N273 each carry an N-linked (GlcNAc...) asparagine glycan. Position 461 (C461) interacts with heme.

The protein belongs to the cytochrome P450 family. Heme is required as a cofactor.

The protein resides in the membrane. Its pathway is secondary metabolite biosynthesis; terpenoid biosynthesis. In terms of biological role, cytochrome P450 monooxygenase; part of the gene cluster that mediates the biosynthesis of xenovulene A, an unusual meroterpenoid that has potent inhibitory effects on the human gamma-aminobutyrate A (GABAA) benzodiazepine receptor. The first step of xenovulene A biosynthesis is the biosynthesis of 3-methylorcinaldehyde performed by the non-reducing polyketide synthase aspks1. The salicylate hydroxylase asL1 then catalyzes the oxidative dearomatization of 3-methylorcinaldehyde to yield a dearomatized hydroxycyclohexadione. The 2-oxoglutarate-dependent dioxygenase asL3 further catalyzes the oxidative ring expansion to provide the first tropolone metabolite. The cytochrome P450 monooxygenase asR2 allows the synthesis of tropolone hemiacetal. In parallel, a previously unrecognised class of terpene cyclase, asR6, produces alpha-humulene from farnesylpyrophosphate (FPP). The putative Diels-Alderase asR5 probably catalyzes the formation of the tropolone-humulene skeleton by linking humulene and the polyketide moiety. Oxidative-ring contractions catalyzed by asL4 and asL6 then processively remove carbon atoms from the polyketide to yield xenovulene A. This Sarocladium schorii (Acremonium strictum (strain IMI 501407)) protein is Cytochrome P450 monooxygenase asR2.